Consider the following 443-residue polypeptide: MATAASNPYLASSSILSSGSIVHSDSGGGMQQGSAAVTSVSGGYRGDPTVKMVQSDFMQGAMAASNGGHMLSHAHQWVTSLPHAAAAAAAAAVAAAEAGSPWSSSPVGMTGSPQQQDVKNNSGRDDLHSGTALHHRAPHLGPHQTHAGAWGSTTAAHIPSLTGSQQQQQSLIYSQPGGFTVNGMLSPPGSQSLVHPGLVRGDTPELDHSSHHHHHHHQHQHHQQAHHGVNSHDPHSDEDTPTSDDLEHFAKQFKQRRIKLGFTQADVGLALGTLYGNVFSQTTICRFEALQLSFKNMCKLKPLLNKWLEEADSSTGSPTSIDKIAAQGRKRKKRTSIEVSVKGALESHFLKCPKPSAQEITSLADNLQLEKEVVRVWFCNRRQKEKRMTPPGVPQTPEDVYSQVGNGHFLVDYLKDASLTGPSEPGDQRVTTTSSFHQVILAH.

Disordered stretches follow at residues 21-40, 100-150, and 182-244; these read IVHSDSGGGMQQGSAAVTSV, SPWS…AGAW, and NGML…PTSD. Over residues 101–121 the composition is skewed to polar residues; that stretch reads PWSSSPVGMTGSPQQQDVKNN. The segment covering 210–225 has biased composition (basic residues); that stretch reads SHHHHHHHQHQHHQQA. In terms of domain architecture, POU-specific spans 238–312; it reads EDTPTSDDLE…LLNKWLEEAD (75 aa). Phosphoserine is present on serine 317. Positions 330 to 389 form a DNA-binding region, homeobox; the sequence is KRKKRTSIEVSVKGALESHFLKCPKPSAQEITSLADNLQLEKEVVRVWFCNRRQKEKRMT.

It belongs to the POU transcription factor family. Class-3 subfamily. In terms of tissue distribution, predominantly expressed in the central nervous system.

Its subcellular location is the nucleus. In terms of biological role, transcription factor that may play important roles in patterning the embryonic brain. The sequence is that of POU domain, class 3, transcription factor 3-B (pou3f3b) from Danio rerio (Zebrafish).